We begin with the raw amino-acid sequence, 60 residues long: Large ribosomal subunit protein bL32 (60 aa).

This sequence belongs to the bacterial ribosomal protein bL32 family.

The protein is Large ribosomal subunit protein bL32 of Persephonella marina (strain DSM 14350 / EX-H1).